The following is a 700-amino-acid chain: Elongation factor G (700 aa).

The region spanning 8–290 (ERYRNIGISA…AVVEYLPAPT (283 aa)) is the tr-type G domain. GTP-binding positions include 17–24 (AHIDAGKT), 88–92 (DTPGH), and 142–145 (NKMD).

This sequence belongs to the TRAFAC class translation factor GTPase superfamily. Classic translation factor GTPase family. EF-G/EF-2 subfamily.

It is found in the cytoplasm. Functionally, catalyzes the GTP-dependent ribosomal translocation step during translation elongation. During this step, the ribosome changes from the pre-translocational (PRE) to the post-translocational (POST) state as the newly formed A-site-bound peptidyl-tRNA and P-site-bound deacylated tRNA move to the P and E sites, respectively. Catalyzes the coordinated movement of the two tRNA molecules, the mRNA and conformational changes in the ribosome. The chain is Elongation factor G from Haemophilus influenzae (strain PittEE).